We begin with the raw amino-acid sequence, 322 residues long: Thymidylate synthase (322 aa).

Residues Arg25 and 184–185 contribute to the dUMP site; that span reads RR. The Nucleophile role is filled by Cys204. DUMP contacts are provided by residues 224–227, Asn235, and 265–267; these read RSGD and HIY. Position 227 (Asp227) interacts with (6R)-5,10-methylene-5,6,7,8-tetrahydrofolate. Ala321 contributes to the (6R)-5,10-methylene-5,6,7,8-tetrahydrofolate binding site.

This sequence belongs to the thymidylate synthase family. Bacterial-type ThyA subfamily. As to quaternary structure, homodimer.

Its subcellular location is the cytoplasm. The catalysed reaction is dUMP + (6R)-5,10-methylene-5,6,7,8-tetrahydrofolate = 7,8-dihydrofolate + dTMP. It functions in the pathway pyrimidine metabolism; dTTP biosynthesis. Its function is as follows. Catalyzes the reductive methylation of 2'-deoxyuridine-5'-monophosphate (dUMP) to 2'-deoxythymidine-5'-monophosphate (dTMP) while utilizing 5,10-methylenetetrahydrofolate (mTHF) as the methyl donor and reductant in the reaction, yielding dihydrofolate (DHF) as a by-product. This enzymatic reaction provides an intracellular de novo source of dTMP, an essential precursor for DNA biosynthesis. The chain is Thymidylate synthase from Leuconostoc mesenteroides subsp. mesenteroides (strain ATCC 8293 / DSM 20343 / BCRC 11652 / CCM 1803 / JCM 6124 / NCDO 523 / NBRC 100496 / NCIMB 8023 / NCTC 12954 / NRRL B-1118 / 37Y).